A 33-amino-acid polypeptide reads, in one-letter code: Cytochrome b6-f complex subunit 8 (33 aa).

The helical transmembrane segment at 2–22 (LFTIAWASLAAVFSFSIAMVV) threads the bilayer.

The protein belongs to the PetN family. The 4 large subunits of the cytochrome b6-f complex are cytochrome b6, subunit IV (17 kDa polypeptide, PetD), cytochrome f and the Rieske protein, while the 4 small subunits are PetG, PetL, PetM and PetN. The complex functions as a dimer.

It is found in the cellular thylakoid membrane. In terms of biological role, component of the cytochrome b6-f complex, which mediates electron transfer between photosystem II (PSII) and photosystem I (PSI), cyclic electron flow around PSI, and state transitions. The chain is Cytochrome b6-f complex subunit 8 from Synechococcus sp. (strain CC9311).